The sequence spans 201 residues: Peptidyl-tRNA hydrolase (201 aa).

Residue Tyr15 participates in tRNA binding. His20 serves as the catalytic Proton acceptor. TRNA-binding residues include Tyr66, Asn68, and Asn114.

Belongs to the PTH family. In terms of assembly, monomer.

Its subcellular location is the cytoplasm. It carries out the reaction an N-acyl-L-alpha-aminoacyl-tRNA + H2O = an N-acyl-L-amino acid + a tRNA + H(+). Hydrolyzes ribosome-free peptidyl-tRNAs (with 1 or more amino acids incorporated), which drop off the ribosome during protein synthesis, or as a result of ribosome stalling. Its function is as follows. Catalyzes the release of premature peptidyl moieties from peptidyl-tRNA molecules trapped in stalled 50S ribosomal subunits, and thus maintains levels of free tRNAs and 50S ribosomes. This chain is Peptidyl-tRNA hydrolase, found in Burkholderia mallei (strain NCTC 10247).